The sequence spans 122 residues: Large ribosomal subunit protein uL14 (122 aa).

The protein belongs to the universal ribosomal protein uL14 family. Part of the 50S ribosomal subunit. Forms a cluster with proteins L3 and L19. In the 70S ribosome, L14 and L19 interact and together make contacts with the 16S rRNA in bridges B5 and B8.

Binds to 23S rRNA. Forms part of two intersubunit bridges in the 70S ribosome. This Psychromonas ingrahamii (strain DSM 17664 / CCUG 51855 / 37) protein is Large ribosomal subunit protein uL14.